The chain runs to 629 residues: tRNA uridine 5-carboxymethylaminomethyl modification enzyme MnmG (629 aa).

Position 13-18 (13-18) interacts with FAD; it reads GGGHAG. NAD(+) is bound at residue 273–287; it reads GPRYCPSIEDKIVRF.

Belongs to the MnmG family. As to quaternary structure, homodimer. Heterotetramer of two MnmE and two MnmG subunits. The cofactor is FAD.

The protein localises to the cytoplasm. Functionally, NAD-binding protein involved in the addition of a carboxymethylaminomethyl (cmnm) group at the wobble position (U34) of certain tRNAs, forming tRNA-cmnm(5)s(2)U34. This chain is tRNA uridine 5-carboxymethylaminomethyl modification enzyme MnmG, found in Pseudoalteromonas translucida (strain TAC 125).